We begin with the raw amino-acid sequence, 201 residues long: Small ribosomal subunit protein uS4c (201 aa).

The disordered stretch occupies residues 20–44; that stretch reads GLTSKRPRAGSDLRNQSRSGKKSQY. The 64-residue stretch at 89–152 folds into the S4 RNA-binding domain; that stretch reads MRLDNILFRL…NSRTLVQNLL (64 aa).

This sequence belongs to the universal ribosomal protein uS4 family. As to quaternary structure, part of the 30S ribosomal subunit. Contacts protein S5. The interaction surface between S4 and S5 is involved in control of translational fidelity.

The protein localises to the plastid. It is found in the chloroplast. In terms of biological role, one of the primary rRNA binding proteins, it binds directly to 16S rRNA where it nucleates assembly of the body of the 30S subunit. With S5 and S12 plays an important role in translational accuracy. The sequence is that of Small ribosomal subunit protein uS4c (rps4) from Aethionema cordifolium (Lebanon stonecress).